Reading from the N-terminus, the 577-residue chain is ER degradation-enhancing alpha-mannosidase-like protein 2 (577 aa).

Residues M1–G21 form the signal peptide. 4 N-linked (GlcNAc...) asparagine glycosylation sites follow: N90, N112, N289, and N450. The disordered stretch occupies residues P513–P561. Polar residues-rich tracts occupy residues G531–N540 and P547–P561.

Belongs to the glycosyl hydrolase 47 family. N-glycosylated.

The protein resides in the endoplasmic reticulum lumen. In terms of biological role, involved in the endoplasmic reticulum-associated degradation (ERAD) pathway that targets misfolded glycoproteins for degradation in an N-glycan-dependent manner. May initiate ERAD by promoting the first mannose trimming step of ERAD substrates, from Man9GlcNAc2 to Man8GlcNAc2. Seems to recognize and bind to exposed hydrophobic regions in target proteins. The protein is ER degradation-enhancing alpha-mannosidase-like protein 2 of Mus musculus (Mouse).